Reading from the N-terminus, the 173-residue chain is MDYFTLFGLPARYTVDREQLASCYQELQRQFHPDRFASQPEREKTLALQQAVTINDGYQTLKHPLKRAEYMLSLHGFDLANEQHTMNDNAFLMEQLMLREELECIADKANPEVALADFAARLNGMIKTRSQLMVQQLDEQQWEQAADTVRKLRFLDKLQQQVEQLEERLLDDF.

The J domain maps to 2–74; it reads DYFTLFGLPA…LKRAEYMLSL (73 aa).

The protein belongs to the HscB family. In terms of assembly, interacts with HscA and stimulates its ATPase activity. Interacts with IscU.

Functionally, co-chaperone involved in the maturation of iron-sulfur cluster-containing proteins. Seems to help targeting proteins to be folded toward HscA. The protein is Co-chaperone protein HscB of Photorhabdus laumondii subsp. laumondii (strain DSM 15139 / CIP 105565 / TT01) (Photorhabdus luminescens subsp. laumondii).